Reading from the N-terminus, the 48-residue chain is uncharacterized protein (48 aa).

This is an uncharacterized protein from Schizosaccharomyces pombe (strain 972 / ATCC 24843) (Fission yeast).